Here is a 185-residue protein sequence, read N- to C-terminus: MQAKLLFTRLNFRRPSTTLRQFPLTCFLFHSKAFYSDLVTKEPLITPKRIINKTPGLNLSISERASNRLAEIYRNSKENLRISVESGGCHGFQYNLTLEPATKPDIKNDVKDKEFSDDLDDDDSKDIIYVLPEDKGRVIIDSKSLNILNNTTLTYTNELIGSSFKIINGSLKSSCGCGSSFDIEN.

Residues C89, C175, and C177 each coordinate Fe cation.

Belongs to the HesB/IscA family.

It is found in the mitochondrion matrix. In terms of biological role, involved in the assembly of mitochondrial and cytoplasmic iron-sulfur proteins. Probably involved in the binding of an intermediate of Fe/S cluster assembly. This chain is Iron-sulfur assembly protein 2 (ISA2), found in Saccharomyces cerevisiae (strain ATCC 204508 / S288c) (Baker's yeast).